Here is a 797-residue protein sequence, read N- to C-terminus: Speckle targeted PIP5K1A-regulated poly(A) polymerase (797 aa).

A Matrin-type zinc finger spans residues Phe14–Leu44. An RRM domain is found at Asn54–Lys126. Ser205 serves as a coordination point for ATP. Mg(2+)-binding residues include Asp216 and Asp218. 6 residues coordinate UTP: Asp216, Asp218, Asn319, Arg341, Tyr363, and His495. Asn319 lines the ATP pocket. A PAP-associated domain is found at Asp421 to His495. The interval Gln544 to Met787 is KA1; binds the bulging loops of U6 snRNA but is dispensable for terminal uridylyltransferase activity. The interval Glu611 to Thr659 is disordered. The segment covering Ser615–Ser624 has biased composition (basic and acidic residues). Residues Glu627–Gln640 are compositionally biased toward polar residues.

The protein belongs to the DNA polymerase type-B-like family. In terms of assembly, associates with the cleavage and polyadenylation specificity factor (CPSF) complex. It depends on Mg(2+) as a cofactor. Mn(2+) is required as a cofactor.

Its subcellular location is the nucleus. The protein resides in the nucleolus. It localises to the nucleus speckle. The enzyme catalyses RNA(n) + UTP = RNA(n)-3'-uridine ribonucleotide + diphosphate. It catalyses the reaction RNA(n) + ATP = RNA(n)-3'-adenine ribonucleotide + diphosphate. Its function is as follows. Poly(A) polymerase that creates the 3'-poly(A) tail of specific pre-mRNAs. In addition to polyadenylation, it is also required for the 3'-end cleavage of pre-mRNAs: binds to the 3'UTR of targeted pre-mRNAs and promotes the recruitment and assembly of the CPSF complex on the 3'UTR of pre-mRNAs. In addition to adenylyltransferase activity, also has uridylyltransferase activity. However, the ATP ratio is higher than UTP in cells, suggesting that it functions primarily as a poly(A) polymerase. The sequence is that of Speckle targeted PIP5K1A-regulated poly(A) polymerase (tut1) from Danio rerio (Zebrafish).